Here is a 317-residue protein sequence, read N- to C-terminus: Beta-ketoacyl-[acyl-carrier-protein] synthase III (317 aa).

Residues Cys-112 and His-244 contribute to the active site. Residues 245-249 are ACP-binding; the sequence is QANLR. Asn-274 is an active-site residue.

Belongs to the thiolase-like superfamily. FabH family. Homodimer.

The protein resides in the cytoplasm. The catalysed reaction is malonyl-[ACP] + acetyl-CoA + H(+) = 3-oxobutanoyl-[ACP] + CO2 + CoA. Its pathway is lipid metabolism; fatty acid biosynthesis. Catalyzes the condensation reaction of fatty acid synthesis by the addition to an acyl acceptor of two carbons from malonyl-ACP. Catalyzes the first condensation reaction which initiates fatty acid synthesis and may therefore play a role in governing the total rate of fatty acid production. Possesses both acetoacetyl-ACP synthase and acetyl transacylase activities. Its substrate specificity determines the biosynthesis of branched-chain and/or straight-chain of fatty acids. This Salmonella paratyphi A (strain ATCC 9150 / SARB42) protein is Beta-ketoacyl-[acyl-carrier-protein] synthase III.